Reading from the N-terminus, the 129-residue chain is Small ribosomal subunit protein uS11 (129 aa).

Belongs to the universal ribosomal protein uS11 family. As to quaternary structure, part of the 30S ribosomal subunit. Interacts with proteins S7 and S18. Binds to IF-3.

Located on the platform of the 30S subunit, it bridges several disparate RNA helices of the 16S rRNA. Forms part of the Shine-Dalgarno cleft in the 70S ribosome. This chain is Small ribosomal subunit protein uS11, found in Vibrio campbellii (strain ATCC BAA-1116).